A 206-amino-acid chain; its full sequence is Ribosomal RNA large subunit methyltransferase E (206 aa).

S-adenosyl-L-methionine contacts are provided by G60, W62, D80, D96, and D121. The active-site Proton acceptor is K161.

It belongs to the class I-like SAM-binding methyltransferase superfamily. RNA methyltransferase RlmE family.

The protein resides in the cytoplasm. It carries out the reaction uridine(2552) in 23S rRNA + S-adenosyl-L-methionine = 2'-O-methyluridine(2552) in 23S rRNA + S-adenosyl-L-homocysteine + H(+). Specifically methylates the uridine in position 2552 of 23S rRNA at the 2'-O position of the ribose in the fully assembled 50S ribosomal subunit. This chain is Ribosomal RNA large subunit methyltransferase E, found in Nitrosomonas europaea (strain ATCC 19718 / CIP 103999 / KCTC 2705 / NBRC 14298).